A 683-amino-acid polypeptide reads, in one-letter code: Solute carrier family 28 member 3 (683 aa).

The interval 1 to 71 (MSAFKARGVE…EEEEEGEEDQ (71 aa)) is disordered. The Cytoplasmic portion of the chain corresponds to 1–97 (MSAFKARGVE…FYKRNKKIIH (97 aa)). Positions 60–71 (DNEEEEEGEEDQ) are enriched in acidic residues. The chain crosses the membrane as a helical span at residues 98–118 (YTFLGLLLVGYFALVIAACIV). Residues 119–123 (NFKQS) are Extracellular-facing. A helical membrane pass occupies residues 124–144 (LALLVLTLIAIFFFFWDLFIA). Over 145 to 168 (KYGDKIAEALKPCQKFLDNHWSII) the chain is Cytoplasmic. A helical membrane pass occupies residues 169-189 (RWFVYGALLLAVILWLTLDTA). Topologically, residues 190–192 (KRG) are extracellular. The chain crosses the membrane as a helical span at residues 193–214 (ANQVIPFFGLILYILLVFIFSK). At 215–222 (HPTKVRWR) the chain is on the cytoplasmic side. Residues 223-242 (IVIWGLLLQFIFGLIILRTK) form a helical membrane-spanning segment. The Extracellular portion of the chain corresponds to 243-279 (PGLDAFNWLGIQVQTFLKYTDAGSRFLFGDDFQDHFF). A helical transmembrane segment spans residues 280–300 (AFAVLPIVIFFSTVMSMMYYL). Residues 301–324 (GLMQWLILKVGWLMQITMGTSPME) are Cytoplasmic-facing. An intramembrane region (helical) is located at residues 325 to 343 (SMVSAGNIFVGQTESPLLI). Over 344 to 356 (RPYLADLTISEMH) the chain is Cytoplasmic. The helical transmembrane segment at 357–379 (SVMSSGFATIAGSVLGAYISLGI) threads the bilayer. Over 380-381 (PA) the chain is Extracellular. Residues 382–403 (AHLLTASVMSAPAALAISKTFW) form a helical membrane-spanning segment. Residues 404–438 (PETKKSKNSTQTSIKLEKGQENNLVEAASQGASAA) lie on the Cytoplasmic side of the membrane. A helical transmembrane segment spans residues 439-464 (VPLVANIAANLIAFLAVLAFINATLS). Residues 465–502 (WLGSMFNYPQFSFEIICSYVLMPFAFMMGVNYDDSFLV) lie on the Extracellular side of the membrane. An intramembrane region (helical) is located at residues 503 to 522 (AELLGMKTFFNEFVAYQRLS). Topologically, residues 523–561 (EYIHNRESGGPLFVDGVRQYMSVRSEAIATYALCGFANF) are extracellular. A helical membrane pass occupies residues 562–572 (GSLGIMIGGLS). Residues 573 to 585 (SLAPHRKSDIASC) are Cytoplasmic-facing. Residues 586-608 (GIRALIAGTIACFSTACIAGVLY) form a helical membrane-spanning segment. The Extracellular portion of the chain corresponds to 609-683 (IPELYCPNLL…GFNCSEVRPE (75 aa)).

It belongs to the concentrative nucleoside transporter (CNT) (TC 2.A.41) family. Homotrimer.

The protein resides in the cell membrane. The catalysed reaction is thymidine(out) + 2 Na(+)(out) = thymidine(in) + 2 Na(+)(in). It catalyses the reaction cytidine(out) + 2 Na(+)(out) = cytidine(in) + 2 Na(+)(in). It carries out the reaction uridine(out) + 2 Na(+)(out) = uridine(in) + 2 Na(+)(in). The enzyme catalyses adenosine(out) + 2 Na(+)(out) = adenosine(in) + 2 Na(+)(in). The catalysed reaction is guanosine(out) + 2 Na(+)(out) = guanosine(in) + 2 Na(+)(in). It catalyses the reaction inosine(out) + 2 Na(+)(out) = inosine(in) + 2 Na(+)(in). Sodium-dependent, pyrimidine- and purine-selective. Involved in the homeostasis of endogenous nucleosides. Exhibits the transport characteristics of the nucleoside transport system cib or N3 subtype (N3/cib) (with marked transport of both thymidine and inosine). Employs a 2:1 sodium/nucleoside ratio. Also able to transport gemcitabine, 3'-azido-3'-deoxythymidine (AZT), ribavirin and 3-deazauridine. In Eptatretus stoutii (Pacific hagfish), this protein is Solute carrier family 28 member 3 (SLC28A3).